The sequence spans 975 residues: Protein cramped (975 aa).

Disordered regions lie at residues 1 to 37, 71 to 111, 318 to 346, 403 to 450, and 809 to 844; these read MEEL…GGGA, QKMK…GSGK, AIFP…PSVA, PVAA…LMKM, and PIDR…QEPG. Pro residues predominate over residues 7–20; sequence QPPPPPPLPPPPSS. Basic and acidic residues predominate over residues 86–98; it reads SEREPNKKEEKAA. Residues 100–111 are compositionally biased toward polar residues; it reads KTPSQLKTGSGK. Residues 109–173 form the SANT domain; sequence SGKTTWTNVE…HYYQTYHKIC (65 aa). The span at 410–425 shows a compositional bias: basic and acidic residues; that stretch reads LRTESGSEKRSPETKK. Over residues 815-833 the composition is skewed to low complexity; it reads GTSSGGISSSGSKPDSSMG.

Belongs to the cramped family.

It localises to the nucleus. Its function is as follows. Polycomb group (Pc-G) genes are needed to maintain expression patterns of the homeotic selector genes of the Antennapedia (Antp-C) and Bithorax (Bx-C) complexes, and hence for the maintenance of segmental determination. Can act as a modifier of position effect variegation (PEV). This chain is Protein cramped (crm), found in Drosophila sechellia (Fruit fly).